A 162-amino-acid polypeptide reads, in one-letter code: NADH-quinone oxidoreductase subunit C (162 aa).

Belongs to the complex I 30 kDa subunit family. In terms of assembly, NDH-1 is composed of 14 different subunits. Subunits NuoB, C, D, E, F, and G constitute the peripheral sector of the complex.

The protein resides in the cell inner membrane. It catalyses the reaction a quinone + NADH + 5 H(+)(in) = a quinol + NAD(+) + 4 H(+)(out). In terms of biological role, NDH-1 shuttles electrons from NADH, via FMN and iron-sulfur (Fe-S) centers, to quinones in the respiratory chain. The immediate electron acceptor for the enzyme in this species is believed to be ubiquinone. Couples the redox reaction to proton translocation (for every two electrons transferred, four hydrogen ions are translocated across the cytoplasmic membrane), and thus conserves the redox energy in a proton gradient. In Geobacter metallireducens (strain ATCC 53774 / DSM 7210 / GS-15), this protein is NADH-quinone oxidoreductase subunit C.